Reading from the N-terminus, the 633-residue chain is Alpha-amylase (633 aa).

Glutamate 123 serves as the catalytic Nucleophile. The active-site Proton donor is aspartate 214.

This sequence belongs to the glycosyl hydrolase 57 family.

It catalyses the reaction Endohydrolysis of (1-&gt;4)-alpha-D-glucosidic linkages in polysaccharides containing three or more (1-&gt;4)-alpha-linked D-glucose units.. The sequence is that of Alpha-amylase (amyA) from Pyrococcus horikoshii (strain ATCC 700860 / DSM 12428 / JCM 9974 / NBRC 100139 / OT-3).